Consider the following 476-residue polypeptide: Surface membrane glycoprotein GP46/M-2 (476 aa).

The N-terminal stretch at 1–32 (MAQCVRRLVLAAPLAAVVALLLCTSSAPVARA) is a signal peptide. A run of 4 repeats spans residues 107–130 (VMILALDFGAMGQGLSGTLPPSWS), 131–154 (SMKHLIVLDLEGTKVSGTLPPEWS), 155–178 (EMTSAEALQLENCGLSGSLPTSWS), and 179–202 (SMPKLRIVSLSGNHFCGCVPDSWR). Residues 107–202 (VMILALDFGA…FCGCVPDSWR (96 aa)) are 4 X 24 AA tandem repeats. Disordered regions lie at residues 231-255 (APGTTTTNPPTTTGTPAASSTPSPG) and 348-370 (ALSPPPADGETDSHTRTRTRRRA). Cys-452 carries GPI-anchor amidated cysteine lipidation. Positions 453-476 (PALFDGARLRCCALVVCAGAAPAG) are cleaved as a propeptide — removed in mature form.

It is found in the cell membrane. This is Surface membrane glycoprotein GP46/M-2 from Leishmania amazonensis.